Reading from the N-terminus, the 231-residue chain is MKVTNLSEKEERGGELTEAEKEELRKSEKGAIIELLVPVDTYLSAGVHIGTHSCTKYMESFVYRVRAEGLYVLDVRKIDERLRIAAKFLSRYDPQDIIVVASRPYAYRPVQKFAEVVGSRALVGRIIPGTFTNPYLSTYIEPKVLLVSDPRTDTQAIKEAAKVGIPIVAFADTDAKIDYIDLIIPANNKGRKSLALLYWALARQILRERRVIPPDGDLAVPVSEFEMRLVQ.

Residues 1 to 23 (MKVTNLSEKEERGGELTEAEKEE) form a disordered region. Positions 7-23 (SEKEERGGELTEAEKEE) are enriched in basic and acidic residues.

This sequence belongs to the universal ribosomal protein uS2 family.

The polypeptide is Small ribosomal subunit protein uS2 (rps2) (Saccharolobus solfataricus (strain ATCC 35092 / DSM 1617 / JCM 11322 / P2) (Sulfolobus solfataricus)).